Consider the following 255-residue polypeptide: NAD kinase (255 aa).

Aspartate 44 serves as the catalytic Proton acceptor. Residues 44–45 (DG), histidine 49, 114–115 (NE), aspartate 144, alanine 152, 155–160 (SAYNLS), and glutamine 216 each bind NAD(+).

This sequence belongs to the NAD kinase family. A divalent metal cation serves as cofactor.

The protein resides in the cytoplasm. It carries out the reaction NAD(+) + ATP = ADP + NADP(+) + H(+). Involved in the regulation of the intracellular balance of NAD and NADP, and is a key enzyme in the biosynthesis of NADP. Catalyzes specifically the phosphorylation on 2'-hydroxyl of the adenosine moiety of NAD to yield NADP. This is NAD kinase from Rickettsia conorii (strain ATCC VR-613 / Malish 7).